The sequence spans 463 residues: Retinoic acid receptor RXR-gamma (463 aa).

A modulating region spans residues 1 to 138 (MYGNYSHFMK…TSPGSLVKHI (138 aa)). A disordered region spans residues 18-53 (SPGHTGSTSMSPSAALSTGKPMDSHPSYTDTPVSAP). Residues 21 to 33 (HTGSTSMSPSAAL) show a composition bias toward polar residues. 2 consecutive NR C4-type zinc fingers follow at residues 139 to 159 (CAICGDRSSGKHYGVYSCEGC) and 175 to 194 (CRDNKDCLIDKRQRNRCQYC). The nuclear receptor DNA-binding region spans 139-204 (CAICGDRSSG…RYQKCLVMGM (66 aa)). The hinge stretch occupies residues 205–230 (KREAVQEERQRSRERAESEAECASSG). A compositionally biased stretch (basic and acidic residues) spans 211–222 (EERQRSRERAES). The disordered stretch occupies residues 211–232 (EERQRSRERAESEAECASSGHE). Residues 231–459 (HEDMPVERIL…TFLMEMLETP (229 aa)) form the NR LBD domain.

It belongs to the nuclear hormone receptor family. NR2 subfamily. As to quaternary structure, homodimer. Heterodimer with a RAR molecule. Binds DNA preferentially as a RAR/RXR heterodimer. Interacts with RARA. In terms of processing, acetylated by EP300.

Its subcellular location is the nucleus. It localises to the cytoplasm. Receptor for retinoic acid. Retinoic acid receptors bind as heterodimers to their target response elements in response to their ligands, all-trans or 9-cis retinoic acid, and regulate gene expression in various biological processes. The RAR/RXR heterodimers bind to the retinoic acid response elements (RARE) composed of tandem 5'-AGGTCA-3' sites known as DR1-DR5. The high affinity ligand for RXRs is 9-cis retinoic acid. In Pongo abelii (Sumatran orangutan), this protein is Retinoic acid receptor RXR-gamma (RXRG).